The following is a 151-amino-acid chain: Glycine and methionine-rich protein (151 aa).

An N-terminal signal peptide occupies residues 1 to 19 (MKTAVVLAAFSALMALARA).

In terms of tissue distribution, component of the acid-insoluble and acid-soluble organic matrix of calcified layers of the shell (at protein level).

It is found in the secreted. This is Glycine and methionine-rich protein from Lottia gigantea (Giant owl limpet).